The primary structure comprises 519 residues: Protein nucleotidyltransferase YdiU (519 aa).

ATP contacts are provided by glycine 101, glycine 103, arginine 104, lysine 124, aspartate 136, glycine 137, arginine 194, and arginine 201. The active-site Proton acceptor is the aspartate 271. Mg(2+)-binding residues include asparagine 272 and aspartate 281. Residue aspartate 281 coordinates ATP.

The protein belongs to the SELO family. Mg(2+) serves as cofactor. Mn(2+) is required as a cofactor.

The catalysed reaction is L-seryl-[protein] + ATP = 3-O-(5'-adenylyl)-L-seryl-[protein] + diphosphate. It carries out the reaction L-threonyl-[protein] + ATP = 3-O-(5'-adenylyl)-L-threonyl-[protein] + diphosphate. It catalyses the reaction L-tyrosyl-[protein] + ATP = O-(5'-adenylyl)-L-tyrosyl-[protein] + diphosphate. The enzyme catalyses L-histidyl-[protein] + UTP = N(tele)-(5'-uridylyl)-L-histidyl-[protein] + diphosphate. The catalysed reaction is L-seryl-[protein] + UTP = O-(5'-uridylyl)-L-seryl-[protein] + diphosphate. It carries out the reaction L-tyrosyl-[protein] + UTP = O-(5'-uridylyl)-L-tyrosyl-[protein] + diphosphate. Nucleotidyltransferase involved in the post-translational modification of proteins. It can catalyze the addition of adenosine monophosphate (AMP) or uridine monophosphate (UMP) to a protein, resulting in modifications known as AMPylation and UMPylation. The polypeptide is Protein nucleotidyltransferase YdiU (Azoarcus sp. (strain BH72)).